A 1375-amino-acid polypeptide reads, in one-letter code: Patatin-like phospholipase domain-containing protein 6 (1375 aa).

The disordered stretch occupies residues 1 to 20; the sequence is MEAPLQTGMMGTSSHGLATN. The Lumenal portion of the chain corresponds to 1–59; it reads MEAPLQTGMMGTSSHGLATNSSGAKVAERDGFQDVLAPGEGSAGRICGAQPVPFVPQVL. Residues 9-20 show a composition bias toward polar residues; sequence MMGTSSHGLATN. The N-linked (GlcNAc...) asparagine glycan is linked to N20. Residues 60–80 form a helical membrane-spanning segment; that stretch reads GVMIGAGVAVVVTAVLILLVV. At 81-1375 the chain is on the cytoplasmic side; sequence RRLRVPKTPA…QEPPGSATDA (1295 aa). 195-322 serves as a coordination point for a nucleoside 3',5'-cyclic phosphate; it reads VLGHFEKPLF…VRVVQIIMVR (128 aa). Disordered regions lie at residues 352–436 and 449–472; these read FPSP…RSDF and LQEE…PREQ. Residue S354 is modified to Phosphoserine. Over residues 359 to 376 the composition is skewed to polar residues; the sequence is TRTSPVRGSKRMVSTSAT. Phosphothreonine is present on T361. Phosphoserine occurs at positions 362 and 372. Residues 384–398 are compositionally biased toward pro residues; it reads GRPPDPTGAPLPGPT. S420 is subject to Phosphoserine. Residue T464 is modified to Phosphothreonine. A nucleoside 3',5'-cyclic phosphate is bound by residues 511–633 and 629–749; these read ELAK…VAAR and TVAA…LSQK. In terms of domain architecture, PNPLA spans 981–1147; that stretch reads LVLGGGGARG…INNLPADIAR (167 aa). The short motif at 985–990 is the GXGXXG element; it reads GGGARG. Residues 1012-1016 carry the GXSXG motif; that stretch reads GTSIG. S1014 (nucleophile) is an active-site residue. D1134 (proton acceptor) is an active-site residue. A DGA/G motif is present at residues 1134–1136; it reads DGG. Positions 1306–1375 are disordered; it reads SYVSDGCADG…QEPPGSATDA (70 aa). Over residues 1313–1329 the composition is skewed to acidic residues; the sequence is ADGEESDCLTEYEEDAG.

This sequence belongs to the NTE family. Post-translationally, glycosylated. In terms of tissue distribution, expressed in brain, placenta, kidney, neuron and skeletal muscle. Expressed in the developing eye, pituitary and brain.

Its subcellular location is the endoplasmic reticulum membrane. It catalyses the reaction a 1-acyl-sn-glycero-3-phosphocholine + H2O = sn-glycerol 3-phosphocholine + a fatty acid + H(+). The catalysed reaction is 1-(9Z-octadecenoyl)-sn-glycero-3-phosphocholine + H2O = sn-glycerol 3-phosphocholine + (9Z)-octadecenoate + H(+). The enzyme catalyses 1-hexadecanoylglycerol + H2O = glycerol + hexadecanoate + H(+). It carries out the reaction 2-hexadecanoylglycerol + H2O = glycerol + hexadecanoate + H(+). It catalyses the reaction 1-(9Z-octadecenoyl)-glycerol + H2O = glycerol + (9Z)-octadecenoate + H(+). The catalysed reaction is 2-(9Z-octadecenoyl)-glycerol + H2O = glycerol + (9Z)-octadecenoate + H(+). The enzyme catalyses 2-(5Z,8Z,11Z,14Z-eicosatetraenoyl)-glycerol + H2O = glycerol + (5Z,8Z,11Z,14Z)-eicosatetraenoate + H(+). It carries out the reaction 1-hexadecanoyl-sn-glycero-3-phosphate + H2O = sn-glycerol 3-phosphate + hexadecanoate + H(+). It catalyses the reaction 1-hexadecanoyl-sn-glycero-3-phosphocholine + H2O = sn-glycerol 3-phosphocholine + hexadecanoate + H(+). Its activity is regulated as follows. Inhibited by a series a OPs such as mipafox (MPX), phenyl saligenin phosphate (PSP), phenyl dipentyl phosphinate (PDPP), diisopropyl fluorophosphate and paraoxon. Functionally, phospholipase B that deacylates intracellular phosphatidylcholine (PtdCho), generating glycerophosphocholine (GroPtdCho). This deacylation occurs at both sn-2 and sn-1 positions of PtdCho. Catalyzes the hydrolysis of several naturally occurring membrane-associated lipids. Hydrolyzes lysophospholipids and monoacylglycerols, preferring the 1-acyl to the 2-acyl isomer. Does not catalyze hydrolysis of di- or triacylglycerols or fatty acid amides. In Homo sapiens (Human), this protein is Patatin-like phospholipase domain-containing protein 6.